Consider the following 438-residue polypeptide: Xaa-Pro dipeptidase 2 (438 aa).

Asp-242, Asp-253, His-333, Glu-378, and Glu-414 together coordinate Mn(2+).

This sequence belongs to the peptidase M24B family. Bacterial-type prolidase subfamily. The cofactor is Mn(2+).

The catalysed reaction is Xaa-L-Pro dipeptide + H2O = an L-alpha-amino acid + L-proline. Its function is as follows. Splits dipeptides with a prolyl residue in the C-terminal position. This is Xaa-Pro dipeptidase 2 from Idiomarina loihiensis (strain ATCC BAA-735 / DSM 15497 / L2-TR).